A 462-amino-acid chain; its full sequence is Argininosuccinate lyase (462 aa).

The protein belongs to the lyase 1 family. Argininosuccinate lyase subfamily.

It localises to the cytoplasm. It carries out the reaction 2-(N(omega)-L-arginino)succinate = fumarate + L-arginine. The protein operates within amino-acid biosynthesis; L-arginine biosynthesis; L-arginine from L-ornithine and carbamoyl phosphate: step 3/3. The sequence is that of Argininosuccinate lyase from Streptococcus agalactiae serotype V (strain ATCC BAA-611 / 2603 V/R).